We begin with the raw amino-acid sequence, 345 residues long: MAETDSFLHLARPLGPVAVGSAPTTAPLNVVIQPQAIFSILDHSLRRNADQERVIGTLLGTRSEDGTEVEIRSTFAVGHTETTDQVEVDMEYQKQMLALHLKANPKEVLVGWYATSSELNTFSALIQNFYSGQGDGTWPHPAVHLTVSTEPGKDIETRAYISAPVGVTAERAADSAAFIPVPYEIRYGEAEKSGLEAIASAKDAESRATNIFTDIEALERAIEEVLGMIDRVSRYVESVIDEEAPASTALGQFLLNALALAPKVEPADIERDFNNHIQDVLVVSYLANTIRTQMELSNRLATAQLTLGGEGASAEAGAQRGQRGGKGGRGGQQRTQERASEEVRA.

In terms of domain architecture, MPN spans 30–166 (VVIQPQAIFS…TRAYISAPVG (137 aa)). Residues 310 to 345 (EGASAEAGAQRGQRGGKGGRGGQQRTQERASEEVRA) form a disordered region. The span at 312 to 321 (ASAEAGAQRG) shows a compositional bias: low complexity. The span at 322–331 (QRGGKGGRGG) shows a compositional bias: gly residues. Residues 335–345 (TQERASEEVRA) show a composition bias toward basic and acidic residues.

This sequence belongs to the eIF-3 subunit F family. Component of the eukaryotic translation initiation factor 3 (eIF-3) complex.

The protein localises to the cytoplasm. In terms of biological role, component of the eukaryotic translation initiation factor 3 (eIF-3) complex, which is involved in protein synthesis of a specialized repertoire of mRNAs and, together with other initiation factors, stimulates binding of mRNA and methionyl-tRNAi to the 40S ribosome. The eIF-3 complex specifically targets and initiates translation of a subset of mRNAs involved in cell proliferation. The sequence is that of Eukaryotic translation initiation factor 3 subunit F from Aspergillus fumigatus (strain CBS 144.89 / FGSC A1163 / CEA10) (Neosartorya fumigata).